The following is a 162-amino-acid chain: Caveolin-2 (162 aa).

The Cytoplasmic portion of the chain corresponds to 1–86 (MGLETEKADV…FEISKYVMYK (86 aa)). Phosphotyrosine; by SRC is present on Tyr-19. Phosphoserine occurs at positions 20 and 23. Tyr-27 carries the phosphotyrosine; by SRC modification. Residue Ser-36 is modified to Phosphoserine. The segment at residues 87-107 (FLTVFLSIPLAFLAGILFATL) is an intramembrane region (helical). Topologically, residues 108–162 (SCLHIWIIMPFVKTCLMVLPSVQTIWKSVTDAIIAPLCTSIGRSFSSVSLQLSHD) are cytoplasmic.

This sequence belongs to the caveolin family. Monomer or homodimer. Interacts with CAV1; the interaction forms a stable heterooligomeric complex that is required for targeting to lipid rafts and for caveolae formation. Tyrosine phosphorylated forms do not form heterooligomers with the Tyr-19-phosphorylated form existing as a monomer or dimer, and the Tyr-27-form as a monomer only. Interacts (tyrosine phosphorylated form) with the SH2 domain-containing proteins, RASA1, NCK1 and SRC. Interacts (tyrosine phosphorylated form) with INSR, the interaction (Tyr-27-phosphorylated form) is increased on insulin stimulation. Interacts (Tyr-19 phosphorylated form) with MAPK1 (phosphorylated form); the interaction, promoted by insulin, leads to nuclear location and MAPK1 activation. Interacts with STAT3; the interaction is increased on insulin-induced tyrosine phosphorylation leading to STAT activation. Phosphorylated on serine and tyrosine residues. CAV1 promotes phosphorylation on Ser-23 which then targets the complex to the plasma membrane, lipid rafts and caveolae. Phosphorylation on Ser-36 appears to modulate mitosis in endothelial cells. Phosphorylation on both Tyr-19 and Tyr-27 is required for insulin-induced 'Ser-727' phosphorylation of STAT3 and its activation. Phosphorylation on Tyr-19 is required for insulin-induced phosphorylation of MAPK1 and DNA binding of STAT3. Tyrosine phosphorylation is induced by both EGF and insulin (By. similarity).

The protein localises to the nucleus. It localises to the cytoplasm. Its subcellular location is the golgi apparatus membrane. The protein resides in the cell membrane. It is found in the membrane. The protein localises to the caveola. May act as a scaffolding protein within caveolar membranes. Interacts directly with G-protein alpha subunits and can functionally regulate their activity. Acts as an accessory protein in conjunction with CAV1 in targeting to lipid rafts and driving caveolae formation. The Ser-36 phosphorylated form has a role in modulating mitosis in endothelial cells. Positive regulator of cellular mitogenesis of the MAPK signaling pathway. Required for the insulin-stimulated nuclear translocation and activation of MAPK1 and STAT3, and the subsequent regulation of cell cycle progression. The sequence is that of Caveolin-2 (CAV2) from Saimiri boliviensis boliviensis (Bolivian squirrel monkey).